A 132-amino-acid polypeptide reads, in one-letter code: Small ribosomal subunit protein uS8 (132 aa).

Belongs to the universal ribosomal protein uS8 family. In terms of assembly, part of the 30S ribosomal subunit. Contacts proteins S5 and S12.

In terms of biological role, one of the primary rRNA binding proteins, it binds directly to 16S rRNA central domain where it helps coordinate assembly of the platform of the 30S subunit. This Bradyrhizobium sp. (strain BTAi1 / ATCC BAA-1182) protein is Small ribosomal subunit protein uS8.